A 377-amino-acid chain; its full sequence is MSDLDYYQVLGVSRTASQEEIKRAYRKLVLKYHPDHNPGDKNAEQKIKNINEAYDILKDEKKRSAYDQLGHQAFKNSGGGNYQQHHGFTGGIDPNDIFENIFGDFMGARRSSKTAFSKKAGANLKYDISLTLEEAFYGVTKIISFKTALTCDACAGKGSLDNNSTSSCPTCRGSGVTRSQQGFFFFENTCQTCRGAGHVIKNPCTKCYGEGRYINTRNLEVKIPAGVKEGSRIKLTGEGEAGSRGGKTGDLYVCITLIPHNTFSVDGNDLHCQLDINCTTAALGGEVEVADITGSKLKLKIPAGTQNNHKLKLSGKGMQILHSDRCGNMIVHVNIKVPKSLTKSQRELMIKLDKELNEASEEGFLSKVRNFWASGSE.

The 66-residue stretch at 5-70 folds into the J domain; it reads DYYQVLGVSR…KKRSAYDQLG (66 aa). A CR-type zinc finger spans residues 138 to 216; the sequence is GVTKIISFKT…CYGEGRYINT (79 aa). Zn(2+) is bound by residues Cys151, Cys154, Cys168, Cys171, Cys190, Cys193, Cys204, and Cys207. CXXCXGXG motif repeat units lie at residues 151-158, 168-175, 190-197, and 204-211; these read CDACAGKG, CPTCRGSG, CQTCRGAG, and CTKCYGEG.

Belongs to the DnaJ family. In terms of assembly, homodimer. Zn(2+) serves as cofactor.

Its subcellular location is the cytoplasm. Functionally, participates actively in the response to hyperosmotic and heat shock by preventing the aggregation of stress-denatured proteins and by disaggregating proteins, also in an autonomous, DnaK-independent fashion. Unfolded proteins bind initially to DnaJ; upon interaction with the DnaJ-bound protein, DnaK hydrolyzes its bound ATP, resulting in the formation of a stable complex. GrpE releases ADP from DnaK; ATP binding to DnaK triggers the release of the substrate protein, thus completing the reaction cycle. Several rounds of ATP-dependent interactions between DnaJ, DnaK and GrpE are required for fully efficient folding. Also involved, together with DnaK and GrpE, in the DNA replication of plasmids through activation of initiation proteins. In Orientia tsutsugamushi (strain Boryong) (Rickettsia tsutsugamushi), this protein is Chaperone protein DnaJ.